Here is a 28-residue protein sequence, read N- to C-terminus: Cruzioseptin-10 (28 aa).

Expressed by the skin glands.

Its subcellular location is the secreted. Has antimicrobial activity. The chain is Cruzioseptin-10 from Cruziohyla calcarifer (Splendid leaf frog).